A 141-amino-acid chain; its full sequence is Hemoglobin subunit alpha-1 (141 aa).

Residues 1 to 141 (VLSEGNKKAI…VTYQLSSLYR (141 aa)) form the Globin domain. H59 contacts O2. H88 is a binding site for heme b.

The protein belongs to the globin family. In terms of assembly, heterotetramer of two alpha chains and two beta chains. As to expression, red blood cells.

Involved in oxygen transport from the lung to the various peripheral tissues. The sequence is that of Hemoglobin subunit alpha-1 from Torpedo marmorata (Marbled electric ray).